Consider the following 1159-residue polypeptide: Ferroxidase HEPHL1 (1159 aa).

Positions 1-23 are cleaved as a signal peptide; the sequence is MFLKQPGGCILLQFLGLLGLVGA. Plastocyanin-like domains are found at residues 24–206, 217–365, 378–560, 570–718, 730–906, and 914–1092; these read VTRT…LLVC, MRTD…VGNC, QRRY…LLVC, TQKG…ISSC, MLRT…LITC, and KGRR…VPSQ. Topologically, residues 24 to 1114 are extracellular; that stretch reads VTRTYYIGIV…KNLRPRGAKA (1091 aa). The Cu cation site is built by H126 and H128. Residue N160 is glycosylated (N-linked (GlcNAc...) asparagine). C180 and C206 are joined by a disulfide. H186 and H188 together coordinate Cu cation. Residue N235 is glycosylated (N-linked (GlcNAc...) asparagine). C284 and C365 form a disulfide bridge. 3 residues coordinate Cu cation: H303, C346, and H351. N406 is a glycosylation site (N-linked (GlcNAc...) asparagine). Residues C534 and C560 are joined by a disulfide bond. N-linked (GlcNAc...) asparagine glycosylation occurs at N588. C637 and C718 are oxidised to a cystine. Residues H656, C699, H704, and M709 each contribute to the Cu cation site. N-linked (GlcNAc...) asparagine glycosylation occurs at N771. C880 and C906 are joined by a disulfide. N-linked (GlcNAc...) asparagine glycosylation is present at N934. H1002, H1005, H1007, H1047, C1048, H1049, H1053, and M1058 together coordinate Cu cation. Residues 1115-1135 form a helical membrane-spanning segment; the sequence is ALVILFILGLLLLVATVVLAL. Residues 1136-1159 are Cytoplasmic-facing; the sequence is RLRSSRRQMAYREVQSCALPTDAL.

It belongs to the multicopper oxidase family. Cu cation serves as cofactor.

Its subcellular location is the membrane. The catalysed reaction is 4 Fe(2+) + O2 + 4 H(+) = 4 Fe(3+) + 2 H2O. Is a copper-binding glycoprotein with ferroxidase activity. It oxidizes Fe(2+) to Fe(3+) without releasing radical oxygen species. May be involved in the regulation of intracellular iron content. This chain is Ferroxidase HEPHL1 (Hephl1), found in Mus musculus (Mouse).